Reading from the N-terminus, the 75-residue chain is UPF0352 protein plu2871 (75 aa).

Belongs to the UPF0352 family.

The sequence is that of UPF0352 protein plu2871 from Photorhabdus laumondii subsp. laumondii (strain DSM 15139 / CIP 105565 / TT01) (Photorhabdus luminescens subsp. laumondii).